We begin with the raw amino-acid sequence, 132 residues long: L-ectoine synthase (132 aa).

This sequence belongs to the ectoine synthase family.

It carries out the reaction (2S)-4-acetamido-2-aminobutanoate = L-ectoine + H2O. The protein operates within amine and polyamine biosynthesis; ectoine biosynthesis; L-ectoine from L-aspartate 4-semialdehyde: step 3/3. Catalyzes the circularization of gamma-N-acetyl-alpha,gamma-diaminobutyric acid (ADABA) to ectoine (1,4,5,6-tetrahydro-2-methyl-4-pyrimidine carboxylic acid), which is an excellent osmoprotectant. The protein is L-ectoine synthase of Rhodococcus jostii (strain RHA1).